A 318-amino-acid polypeptide reads, in one-letter code: Phospho-N-acetylmuramoyl-pentapeptide-transferase (318 aa).

A run of 10 helical transmembrane segments spans residues Leu-5–Phe-25, Pro-50–Pro-70, Pro-71–Val-91, Val-115–Ile-135, Val-139–Val-159, Gly-173–Leu-193, Leu-198–His-218, Val-222–Met-242, Val-248–Val-268, and Val-298–Ile-318.

It belongs to the glycosyltransferase 4 family. MraY subfamily. Requires Mg(2+) as cofactor.

It localises to the cell membrane. It carries out the reaction UDP-N-acetyl-alpha-D-muramoyl-L-alanyl-gamma-D-glutamyl-meso-2,6-diaminopimeloyl-D-alanyl-D-alanine + di-trans,octa-cis-undecaprenyl phosphate = di-trans,octa-cis-undecaprenyl diphospho-N-acetyl-alpha-D-muramoyl-L-alanyl-D-glutamyl-meso-2,6-diaminopimeloyl-D-alanyl-D-alanine + UMP. It functions in the pathway cell wall biogenesis; peptidoglycan biosynthesis. Functionally, catalyzes the initial step of the lipid cycle reactions in the biosynthesis of the cell wall peptidoglycan: transfers peptidoglycan precursor phospho-MurNAc-pentapeptide from UDP-MurNAc-pentapeptide onto the lipid carrier undecaprenyl phosphate, yielding undecaprenyl-pyrophosphoryl-MurNAc-pentapeptide, known as lipid I. This is Phospho-N-acetylmuramoyl-pentapeptide-transferase from Moorella thermoacetica (strain ATCC 39073 / JCM 9320).